The sequence spans 437 residues: 3-phosphoshikimate 1-carboxyvinyltransferase (437 aa).

3 residues coordinate 3-phosphoshikimate: Lys-22, Ser-23, and Arg-27. Lys-22 is a binding site for phosphoenolpyruvate. Positions 94 and 122 each coordinate phosphoenolpyruvate. Residues Ser-167, Gln-169, Asp-314, and Lys-341 each coordinate 3-phosphoshikimate. Gln-169 contributes to the phosphoenolpyruvate binding site. Catalysis depends on Asp-314, which acts as the Proton acceptor. Phosphoenolpyruvate is bound by residues Arg-345 and Arg-389.

The protein belongs to the EPSP synthase family. Monomer.

The protein resides in the cytoplasm. It catalyses the reaction 3-phosphoshikimate + phosphoenolpyruvate = 5-O-(1-carboxyvinyl)-3-phosphoshikimate + phosphate. It functions in the pathway metabolic intermediate biosynthesis; chorismate biosynthesis; chorismate from D-erythrose 4-phosphate and phosphoenolpyruvate: step 6/7. In terms of biological role, catalyzes the transfer of the enolpyruvyl moiety of phosphoenolpyruvate (PEP) to the 5-hydroxyl of shikimate-3-phosphate (S3P) to produce enolpyruvyl shikimate-3-phosphate and inorganic phosphate. The protein is 3-phosphoshikimate 1-carboxyvinyltransferase of Oenococcus oeni (strain ATCC BAA-331 / PSU-1).